The sequence spans 1312 residues: Probable histone-lysine N-methyltransferase lin-59 (1312 aa).

2 stretches are compositionally biased toward polar residues: residues 1-11 and 25-36; these read MHGAGEQQQRY and STSSHQYQQQGA. Disordered regions lie at residues 1 to 41, 54 to 81, 154 to 223, 312 to 435, and 524 to 556; these read MHGA…QMHQ, TTTSAAASTSSSGGSNSSGGSGGHRQQG, QPSG…KPVD, EESK…PPPV, and KDNIKKEVKEESTPPPTKLRGRLPSRRTREPSE. Positions 54 to 68 are enriched in low complexity; sequence TTTSAAASTSSSGGS. Residues 69–78 show a composition bias toward gly residues; that stretch reads NSSGGSGGHR. Low complexity predominate over residues 160-176; it reads PMSSNAPATTSSATPDS. Residues 200–210 show a composition bias toward acidic residues; that stretch reads DHDDEEDDDGP. Over residues 312–321 the composition is skewed to basic and acidic residues; that stretch reads EESKKKKDME. The span at 344-367 shows a compositional bias: polar residues; sequence ATRSTNSPDVTTSNLPEEPSTSTM. Over residues 371–382 the composition is skewed to basic and acidic residues; the sequence is KENEDVEKVEGK. The span at 383–394 shows a compositional bias: basic residues; the sequence is RRGRKPKKRRGF. Composition is skewed to basic and acidic residues over residues 395 to 419 and 524 to 535; these read HKESFEDLESDAKKSKAEQHEDHLP and KDNIKKEVKEES. Positions 590–635 constitute an AWS domain; it reads APSLTCGCTKGACTSDMDCLNRALRVQCSSDCSVPYCSNRRFWKED. The region spanning 638 to 750 is the SET domain; sequence NKLCVSNGPR…PNAEITVDKS (113 aa). Residues 913–934 form a disordered region; sequence DNAPRARALSTSCPSPVPSKRG. The PHD-type zinc-finger motif lies at 967–1027; that stretch reads AVRCICGALD…EYICDFCTNK (61 aa). Residues 1100 to 1223 enclose the BAH domain; the sequence is NKYRFPKAAT…KTQRVFEKVP (124 aa). The interval 1248–1295 is disordered; the sequence is RDFRPYDPSNPSPKPPKTSSIPSTSSIDPPQSSSDGLPEVDTKKLSKR. Low complexity predominate over residues 1264 to 1281; that stretch reads KTSSIPSTSSIDPPQSSS.

This sequence belongs to the class V-like SAM-binding methyltransferase superfamily. Histone-lysine methyltransferase family. SET2 subfamily. As to expression, widely expressed throughout embryonic development and into adulthood.

It localises to the nucleus. The catalysed reaction is L-lysyl-[histone] + S-adenosyl-L-methionine = N(6)-methyl-L-lysyl-[histone] + S-adenosyl-L-homocysteine + H(+). In terms of biological role, probable histone methyltransferase. Essential protein required to maintain expression of homeotic genes egl-5 and mab-5. May play an analogous role to the trithorax Group (trxG) proteins. TrxG proteins form multiprotein complexes that are required to maintain the transcriptionally active state of homeotic genes throughout development. May act via a modification of chromatin. The sequence is that of Probable histone-lysine N-methyltransferase lin-59 (lin-59) from Caenorhabditis elegans.